A 405-amino-acid chain; its full sequence is Probable tRNA sulfurtransferase (405 aa).

Residues 60–165 (TEVDKRLKKV…QDAVYISNQL (106 aa)) form the THUMP domain. ATP-binding positions include 183–184 (ML), 208–209 (HF), R265, G287, and Q296.

It belongs to the ThiI family.

Its subcellular location is the cytoplasm. The enzyme catalyses [ThiI sulfur-carrier protein]-S-sulfanyl-L-cysteine + a uridine in tRNA + 2 reduced [2Fe-2S]-[ferredoxin] + ATP + H(+) = [ThiI sulfur-carrier protein]-L-cysteine + a 4-thiouridine in tRNA + 2 oxidized [2Fe-2S]-[ferredoxin] + AMP + diphosphate. The catalysed reaction is [ThiS sulfur-carrier protein]-C-terminal Gly-Gly-AMP + S-sulfanyl-L-cysteinyl-[cysteine desulfurase] + AH2 = [ThiS sulfur-carrier protein]-C-terminal-Gly-aminoethanethioate + L-cysteinyl-[cysteine desulfurase] + A + AMP + 2 H(+). The protein operates within cofactor biosynthesis; thiamine diphosphate biosynthesis. Functionally, catalyzes the ATP-dependent transfer of a sulfur to tRNA to produce 4-thiouridine in position 8 of tRNAs, which functions as a near-UV photosensor. Also catalyzes the transfer of sulfur to the sulfur carrier protein ThiS, forming ThiS-thiocarboxylate. This is a step in the synthesis of thiazole, in the thiamine biosynthesis pathway. The sulfur is donated as persulfide by IscS. The protein is Probable tRNA sulfurtransferase of Lactobacillus acidophilus (strain ATCC 700396 / NCK56 / N2 / NCFM).